Reading from the N-terminus, the 423-residue chain is 4-hydroxy-3-methylbut-2-en-1-yl diphosphate synthase (flavodoxin) (423 aa).

[4Fe-4S] cluster contacts are provided by Cys307, Cys310, Cys353, and Glu360.

The protein belongs to the IspG family. Requires [4Fe-4S] cluster as cofactor.

The catalysed reaction is (2E)-4-hydroxy-3-methylbut-2-enyl diphosphate + oxidized [flavodoxin] + H2O + 2 H(+) = 2-C-methyl-D-erythritol 2,4-cyclic diphosphate + reduced [flavodoxin]. The protein operates within isoprenoid biosynthesis; isopentenyl diphosphate biosynthesis via DXP pathway; isopentenyl diphosphate from 1-deoxy-D-xylulose 5-phosphate: step 5/6. Its function is as follows. Converts 2C-methyl-D-erythritol 2,4-cyclodiphosphate (ME-2,4cPP) into 1-hydroxy-2-methyl-2-(E)-butenyl 4-diphosphate. In Brucella anthropi (strain ATCC 49188 / DSM 6882 / CCUG 24695 / JCM 21032 / LMG 3331 / NBRC 15819 / NCTC 12168 / Alc 37) (Ochrobactrum anthropi), this protein is 4-hydroxy-3-methylbut-2-en-1-yl diphosphate synthase (flavodoxin).